The primary structure comprises 323 residues: Serine/threonine-protein phosphatase PP1-gamma catalytic subunit (323 aa).

Ala2 bears the N-acetylalanine mark. Positions 64, 66, 92, and 124 each coordinate Mn(2+). His125 (proton donor) is an active-site residue. Mn(2+) is bound by residues His173 and His248. Phosphothreonine occurs at positions 307 and 311.

Belongs to the PPP phosphatase family. PP-1 subfamily. In terms of assembly, PP1 comprises a catalytic subunit, PPP1CA, PPP1CB or PPP1CC, which is folded into its native form by inhibitor 2 and glycogen synthetase kinase 3, and then complexed to one or several targeting or regulatory subunits. PPP1R12A, PPP1R12B and PPP1R12C mediate binding to myosin. PPP1R3A (in skeletal muscle), PPP1R3B (in liver), PPP1R3C, PPP1R3D and PPP1R3F (in brain) mediate binding to glycogen. PPP1R15A and PPP1R15B mediate binding to EIF2S1. Part of a complex containing PPP1R15B, PP1 and NCK1/2. Interacts with PPP1R3B, PPP1R7 and CDCA2. Interacts with IKFZ1; the interaction targets PPP1CC to pericentromeric heterochromatin, dephosphorylates IKAROS, stabilizes it and prevents it from degradation. Interacts with NOM1 and PPP1R8. Component of the PTW/PP1 phosphatase complex, composed of PPP1R10/PNUTS, TOX4, WDR82, and PPP1CA or PPP1CB or PPP1CC. Interacts with PPP1R8. Interacts with NEK2. Interacts with PPP1R42; the interaction is direct. Interacts with URI1; the interaction is phosphorylation-dependent and occurs in a growth factor-dependent manner. Interacts with FOXP3. Interacts with TMEM225 (via RVxF motif). Interacts with MKI67. Interacts with RRP1B; this targets PPP1CC to the nucleolus. Interacts with DYNLT4. Interacts (via RVxF motif) with FIRRM; regulates PLK1 kinase activity. Interacts with the KNL1 complex subunit KNL1; the interaction is direct and mutually exclusive with KNL1 binding to microtubules. Component of the SHOC2-MRAS-PP1c (SMP) complex consisting of SHOC2, GTP-bound M-Ras/MRAS and the catalytic subunit of protein phosphatase 1 (either PPP1CA, PPP1CB or PPP1CC). SHOC2 and PP1c preferably bind M-Ras/MRAS, but they also bind K-Ras/KRAS, N-Ras/NRAS and H-Ras/HRAS; these interactions are GTP-dependent and both SHOC2 and PP1c are required to form a stable complex. Interacts with SHOC2 in the absence of Ras GTPases. The cofactor is Mn(2+). In terms of processing, phosphorylated by NEK2.

The protein resides in the cytoplasm. Its subcellular location is the nucleus. The protein localises to the cleavage furrow. It localises to the nucleolus. It is found in the nucleoplasm. The protein resides in the chromosome. Its subcellular location is the centromere. The protein localises to the kinetochore. It localises to the nucleus speckle. It is found in the midbody. The protein resides in the mitochondrion. Its subcellular location is the cytoskeleton. The protein localises to the microtubule organizing center. The enzyme catalyses O-phospho-L-seryl-[protein] + H2O = L-seryl-[protein] + phosphate. It catalyses the reaction O-phospho-L-threonyl-[protein] + H2O = L-threonyl-[protein] + phosphate. Inactivated by binding to URI1. Protein phosphatase that associates with over 200 regulatory proteins to form highly specific holoenzymes which dephosphorylate hundreds of biological targets. Protein phosphatase 1 (PP1) is essential for cell division, and participates in the regulation of glycogen metabolism, muscle contractility and protein synthesis. Dephosphorylates RPS6KB1. Involved in regulation of ionic conductances and long-term synaptic plasticity. May play an important role in dephosphorylating substrates such as the postsynaptic density-associated Ca(2+)/calmodulin dependent protein kinase II. Component of the PTW/PP1 phosphatase complex, which plays a role in the control of chromatin structure and cell cycle progression during the transition from mitosis into interphase. Regulates the recruitment of the SKA complex to kinetochores. Core component of the SHOC2-MRAS-PP1c (SMP) holophosphatase complex that regulates the MAPK pathway activation. Dephosphorylates MKI67 at the onset of anaphase. The SMP complex specifically dephosphorylates the inhibitory phosphorylation at 'Ser-259' of RAF1 kinase, 'Ser-365' of BRAF kinase and 'Ser-214' of ARAF kinase, stimulating their kinase activities. The SMP complex enhances the dephosphorylation activity and substrate specificity of PP1c. The chain is Serine/threonine-protein phosphatase PP1-gamma catalytic subunit (PPP1CC) from Canis lupus familiaris (Dog).